A 409-amino-acid polypeptide reads, in one-letter code: Translation initiation factor 2 subunit gamma (409 aa).

A tr-type G domain is found at glutamine 7–aspartate 203. The tract at residues glycine 16–threonine 23 is G1. Mg(2+)-binding residues include aspartate 19, threonine 23, glycine 44, and serine 46. Aspartate 19 to threonine 24 lines the GTP pocket. The segment at glycine 44 to arginine 48 is G2. Residues aspartate 90–glycine 93 form a G3 region. Residues asparagine 146–aspartate 149 and serine 181–glutamine 183 each bind GTP. The segment at asparagine 146–aspartate 149 is G4. Residues serine 181–glutamine 183 are G5.

This sequence belongs to the TRAFAC class translation factor GTPase superfamily. Classic translation factor GTPase family. EIF2G subfamily. Heterotrimer composed of an alpha, a beta and a gamma chain. Mg(2+) serves as cofactor.

It catalyses the reaction GTP + H2O = GDP + phosphate + H(+). In terms of biological role, eIF-2 functions in the early steps of protein synthesis by forming a ternary complex with GTP and initiator tRNA. This is Translation initiation factor 2 subunit gamma from Natronomonas pharaonis (strain ATCC 35678 / DSM 2160 / CIP 103997 / JCM 8858 / NBRC 14720 / NCIMB 2260 / Gabara) (Halobacterium pharaonis).